The following is a 124-amino-acid chain: Fluoride-specific ion channel FluC (124 aa).

4 helical membrane passes run 3–23 (IIAI…LSIW), 34–54 (YGTL…LVLA), 66–86 (LLIV…SFET), and 100–120 (LYVL…AGVA). Positions 74 and 77 each coordinate Na(+).

Belongs to the fluoride channel Fluc/FEX (TC 1.A.43) family.

It is found in the cell membrane. It carries out the reaction fluoride(in) = fluoride(out). With respect to regulation, na(+) is not transported, but it plays an essential structural role and its presence is essential for fluoride channel function. Functionally, fluoride-specific ion channel. Important for reducing fluoride concentration in the cell, thus reducing its toxicity. In Roseiflexus sp. (strain RS-1), this protein is Fluoride-specific ion channel FluC.